We begin with the raw amino-acid sequence, 510 residues long: Putative cytochrome P450 cyp-13B1 (510 aa).

A heme-binding site is contributed by C456.

The protein belongs to the cytochrome P450 family. Heme is required as a cofactor.

Cytochromes P450 are a group of heme-thiolate monooxygenases. They oxidize a variety of structurally unrelated compounds, including steroids, fatty acids, and xenobiotics. May play a role in the regulation of lifespan. The polypeptide is Putative cytochrome P450 cyp-13B1 (Caenorhabditis elegans).